Consider the following 407-residue polypeptide: Argininosuccinate synthase (407 aa).

ATP is bound by residues 16 to 24 and alanine 44; that span reads AYSGGLDTS. L-citrulline contacts are provided by tyrosine 96 and serine 101. Residue glycine 126 participates in ATP binding. Positions 128, 132, and 133 each coordinate L-aspartate. An L-citrulline-binding site is contributed by asparagine 132. Positions 136, 185, 194, 270, and 282 each coordinate L-citrulline.

The protein belongs to the argininosuccinate synthase family. Type 1 subfamily. In terms of assembly, homotetramer.

It is found in the cytoplasm. It catalyses the reaction L-citrulline + L-aspartate + ATP = 2-(N(omega)-L-arginino)succinate + AMP + diphosphate + H(+). It participates in amino-acid biosynthesis; L-arginine biosynthesis; L-arginine from L-ornithine and carbamoyl phosphate: step 2/3. The protein is Argininosuccinate synthase of Shewanella frigidimarina (strain NCIMB 400).